The chain runs to 314 residues: 2,3-dihydroxyphenylpropionate/2,3-dihydroxicinnamic acid 1,2-dioxygenase 2 (314 aa).

Histidine 115 (proton donor) is an active-site residue. The active-site Proton acceptor is the histidine 179.

It belongs to the LigB/MhpB extradiol dioxygenase family. In terms of assembly, homotetramer. The cofactor is Fe(2+).

It catalyses the reaction 3-(2,3-dihydroxyphenyl)propanoate + O2 = (2Z,4E)-2-hydroxy-6-oxonona-2,4-dienedioate + H(+). The enzyme catalyses (2E)-3-(2,3-dihydroxyphenyl)prop-2-enoate + O2 = (2Z,4E,7E)-2-hydroxy-6-oxonona-2,4,7-trienedioate + H(+). It participates in aromatic compound metabolism; 3-phenylpropanoate degradation. Functionally, catalyzes the non-heme iron(II)-dependent oxidative cleavage of 2,3-dihydroxyphenylpropionic acid and 2,3-dihydroxicinnamic acid into 2-hydroxy-6-ketononadienedioate and 2-hydroxy-6-ketononatrienedioate, respectively. This Pseudomonas putida (Arthrobacter siderocapsulatus) protein is 2,3-dihydroxyphenylpropionate/2,3-dihydroxicinnamic acid 1,2-dioxygenase 2 (mhpB2).